The chain runs to 354 residues: Protein Wnt-8a (354 aa).

A signal peptide spans 1-19; sequence MGHLLMLWVAAGMCYPALG. Cys54 and Cys65 are oxidised to a cystine. Asn103 is a glycosylation site (N-linked (GlcNAc...) asparagine). 10 disulfides stabilise this stretch: Cys104-Cys112, Cys114-Cys132, Cys180-Cys194, Cys182-Cys189, Cys259-Cys297, Cys275-Cys290, Cys294-Cys336, Cys312-Cys327, Cys314-Cys324, and Cys319-Cys320. Residue Ser186 is the site of O-palmitoleoyl serine attachment. Asn262 carries N-linked (GlcNAc...) asparagine glycosylation.

Belongs to the Wnt family. In terms of assembly, forms a soluble 1:1 complex with AFM; this prevents oligomerization and is required for prolonged biological activity. The complex with AFM may represent the physiological form in body fluids. In terms of processing, palmitoleoylation is required for efficient binding to frizzled receptors. Depalmitoleoylation leads to Wnt signaling pathway inhibition. Post-translationally, proteolytic processing by TIKI1 and TIKI2 promotes oxidation and formation of large disulfide-bond oligomers, leading to inactivation of WNT8A.

It is found in the secreted. It localises to the extracellular space. Its subcellular location is the extracellular matrix. In terms of biological role, ligand for members of the frizzled family of seven transmembrane receptors. Plays a role in embryonic patterning. The sequence is that of Protein Wnt-8a (Wnt8a) from Mus musculus (Mouse).